The primary structure comprises 66 residues: Large ribosomal subunit protein bL31 (66 aa).

Cys-16, Cys-18, Cys-36, and Cys-39 together coordinate Zn(2+).

It belongs to the bacterial ribosomal protein bL31 family. Type A subfamily. Part of the 50S ribosomal subunit. The cofactor is Zn(2+).

In terms of biological role, binds the 23S rRNA. This Campylobacter fetus subsp. fetus (strain 82-40) protein is Large ribosomal subunit protein bL31.